The sequence spans 214 residues: N-(5'-phosphoribosyl)anthranilate isomerase (214 aa).

Belongs to the TrpF family.

It catalyses the reaction N-(5-phospho-beta-D-ribosyl)anthranilate = 1-(2-carboxyphenylamino)-1-deoxy-D-ribulose 5-phosphate. It functions in the pathway amino-acid biosynthesis; L-tryptophan biosynthesis; L-tryptophan from chorismate: step 3/5. This is N-(5'-phosphoribosyl)anthranilate isomerase from Halorubrum lacusprofundi (strain ATCC 49239 / DSM 5036 / JCM 8891 / ACAM 34).